The following is a 109-amino-acid chain: Large ribosomal subunit protein uL22 (109 aa).

It belongs to the universal ribosomal protein uL22 family. As to quaternary structure, part of the 50S ribosomal subunit.

This protein binds specifically to 23S rRNA; its binding is stimulated by other ribosomal proteins, e.g. L4, L17, and L20. It is important during the early stages of 50S assembly. It makes multiple contacts with different domains of the 23S rRNA in the assembled 50S subunit and ribosome. Its function is as follows. The globular domain of the protein is located near the polypeptide exit tunnel on the outside of the subunit, while an extended beta-hairpin is found that lines the wall of the exit tunnel in the center of the 70S ribosome. This chain is Large ribosomal subunit protein uL22, found in Neisseria gonorrhoeae (strain ATCC 700825 / FA 1090).